Reading from the N-terminus, the 123-residue chain is DNA-directed RNA polymerase subunit omega (123 aa).

The tract at residues 67-123 (EESAADSLSLGGFSTADVEAEVGGGPVQPDPGASQERAFDEAADGTAQGSGDPDPTT) is disordered.

It belongs to the RNA polymerase subunit omega family. As to quaternary structure, the RNAP catalytic core consists of 2 alpha, 1 beta, 1 beta' and 1 omega subunit. When a sigma factor is associated with the core the holoenzyme is formed, which can initiate transcription.

It carries out the reaction RNA(n) + a ribonucleoside 5'-triphosphate = RNA(n+1) + diphosphate. In terms of biological role, promotes RNA polymerase assembly. Latches the N- and C-terminal regions of the beta' subunit thereby facilitating its interaction with the beta and alpha subunits. The sequence is that of DNA-directed RNA polymerase subunit omega from Halorhodospira halophila (strain DSM 244 / SL1) (Ectothiorhodospira halophila (strain DSM 244 / SL1)).